The chain runs to 361 residues: Septin-2 (361 aa).

Phosphotyrosine is present on tyrosine 17. Positions 34–306 constitute a Septin-type G domain; that stretch reads KGFEFTLMVV…ENFRSERLKR (273 aa). The segment at 44-51 is G1 motif; it reads GESGLGKS. Residues 44-51, threonine 78, glycine 104, and 183-191 each bind GTP; these read GESGLGKS and KADTLTLKE. Positions 101-104 are G3 motif; sequence DTPG. A G4 motif region spans residues 182 to 185; sequence AKAD. Position 190 is an N6-acetyllysine (lysine 190). Tyrosine 211 bears the Phosphotyrosine mark. At serine 218 the chain carries Phosphoserine. GTP-binding residues include glycine 241 and arginine 256. The interval 260 to 270 is important for dimerization; that stretch reads WGVVEVENPEH.

This sequence belongs to the TRAFAC class TrmE-Era-EngA-EngB-Septin-like GTPase superfamily. Septin GTPase family. Septins polymerize into heterooligomeric protein complexes that form filaments, and associate with cellular membranes, actin filaments and microtubules. GTPase activity is required for filament formation. Filaments are assembled from asymmetrical heterotrimers, composed of SEPTIN2, SEPTIN6 and SEPTIN7 that associate head-to-head to form a hexameric unit. Interaction between SEPTIN2 and SEPTIN7 seems indirect. Interacts with SEPTIN5. Interaction with SEPTIN4 not detected. Interacts with SEPTIN9. Component of a septin core octameric complex consisting of SEPTIN12, SEPTIN7, SEPTIN6 and SEPTIN2 or SEPTIN4 in the order 12-7-6-2-2-6-7-12 or 12-7-6-4-4-6-7-12 and located in the sperm annulus. Interacts with MAP4. Interacts with DZIP1L.

Its subcellular location is the cytoplasm. The protein resides in the cytoskeleton. It is found in the spindle. It localises to the chromosome. The protein localises to the centromere. Its subcellular location is the kinetochore. The protein resides in the cleavage furrow. It is found in the midbody. It localises to the cell cortex. The protein localises to the cell projection. Its subcellular location is the cilium membrane. The protein resides in the cilium. It is found in the flagellum. Functionally, filament-forming cytoskeletal GTPase. Forms a filamentous structure with SEPTIN12, SEPTIN6, SEPTIN2 and probably SEPTIN4 at the sperm annulus which is required for the structural integrity and motility of the sperm tail during postmeiotic differentiation. Required for normal organization of the actin cytoskeleton. Plays a role in the biogenesis of polarized columnar-shaped epithelium by maintaining polyglutamylated microtubules, thus facilitating efficient vesicle transport, and by impeding MAP4 binding to tubulin. Required for the progression through mitosis. Forms a scaffold at the midplane of the mitotic splindle required to maintain CENPE localization at kinetochores and consequently chromosome congression. During anaphase, may be required for chromosome segregation and spindle elongation. Plays a role in ciliogenesis and collective cell movements. In cilia, required for the integrity of the diffusion barrier at the base of the primary cilium that prevents diffusion of transmembrane proteins between the cilia and plasma membranes: probably acts by regulating the assembly of the tectonic-like complex (also named B9 complex) by localizing TMEM231 protein. The chain is Septin-2 from Bos taurus (Bovine).